The following is an 85-amino-acid chain: Dual endothelin-1/VEGF signal peptide receptor (85 aa).

Topologically, residues 1–18 (MTMFKGSNEMKSRWNWGS) are extracellular. Residues 19–37 (ITCIICFTCVGSQLSMSSS) form a helical membrane-spanning segment. Topologically, residues 38–85 (KASNFSGPLQLYQRELEIFIVLTDVPNYRLIKENSHLHTTIVDQGRTV) are cytoplasmic.

In terms of processing, N-glycosylated. In terms of tissue distribution, expressed in kidney. Expressed in endothelial cells.

The protein localises to the cell membrane. Functionally, dual receptor for both endothelin-1 and the signal sequence of vascular endothelial growth factor A. Does not act as a receptor for angiotensin-2. Does not bind the VEGFA mature protein. May play a role in angiogenesis with a significant role in cardiovascular and neural development. This chain is Dual endothelin-1/VEGF signal peptide receptor, found in Homo sapiens (Human).